The chain runs to 98 residues: Large ribosomal subunit protein uL23 (98 aa).

This sequence belongs to the universal ribosomal protein uL23 family. In terms of assembly, part of the 50S ribosomal subunit. Contacts protein L29, and trigger factor when it is bound to the ribosome.

One of the early assembly proteins it binds 23S rRNA. One of the proteins that surrounds the polypeptide exit tunnel on the outside of the ribosome. Forms the main docking site for trigger factor binding to the ribosome. In Jannaschia sp. (strain CCS1), this protein is Large ribosomal subunit protein uL23.